A 555-amino-acid polypeptide reads, in one-letter code: Probable apyrase 6 (555 aa).

Residues 1–10 show a composition bias toward basic residues; it reads MRRSHARSRV. The disordered stretch occupies residues 1–45; the sequence is MRRSHARSRVKNSSSSKSDMDPIKFQIRSGNRAPSSSSTYTLTKP. At 1–55 the chain is on the cytoplasmic side; the sequence is MRRSHARSRVKNSSSSKSDMDPIKFQIRSGNRAPSSSSTYTLTKPNSKHAKSNLL. Over residues 28–45 the composition is skewed to polar residues; that stretch reads RSGNRAPSSSSTYTLTKP. Residues 56–76 traverse the membrane as a helical segment; sequence LTVGSISVVLGVLFLCYSILF. Residues 77 to 512 are Extracellular-facing; it reads SGGNLRGSLR…HALFSNHPKT (436 aa). Residue 89–99 participates in ATP binding; it reads VVIDGGSTGTR. Glu212 acts as the Proton acceptor in catalysis. An ATP-binding site is contributed by 236 to 246; sequence GIVELGGASAQ. Residues Asn267 and Asn348 are each glycosylated (N-linked (GlcNAc...) asparagine). A helical membrane pass occupies residues 513 to 533; it reads LHYLIGIPILMTVLVYLVTKW. Residues 534–555 lie on the Cytoplasmic side of the membrane; sequence RKPQLKTIYDLEKGRYIVTRIR.

Belongs to the GDA1/CD39 NTPase family. It depends on Ca(2+) as a cofactor. Detected in mature pollen grains (at the protein level). Also expressed in the veins and hydathode regions of rosette leaves.

It localises to the cytoplasmic vesicle membrane. It carries out the reaction a ribonucleoside 5'-triphosphate + 2 H2O = a ribonucleoside 5'-phosphate + 2 phosphate + 2 H(+). Catalyzes the hydrolysis of phosphoanhydride bonds of nucleoside tri- and di-phosphates. Involved in the regulation of pollen and anther development. In Arabidopsis thaliana (Mouse-ear cress), this protein is Probable apyrase 6 (APY6).